The primary structure comprises 65 residues: Small ribosomal subunit protein bS21 (65 aa).

Positions 46–57 (RLKRSRSKRRAQ) are enriched in basic residues. The tract at residues 46-65 (RLKRSRSKRRAQRANEERNS) is disordered.

It belongs to the bacterial ribosomal protein bS21 family.

The protein is Small ribosomal subunit protein bS21 of Chlorobaculum tepidum (strain ATCC 49652 / DSM 12025 / NBRC 103806 / TLS) (Chlorobium tepidum).